Consider the following 214-residue polypeptide: Probable transaldolase (214 aa).

Lysine 83 functions as the Schiff-base intermediate with substrate in the catalytic mechanism.

It belongs to the transaldolase family. Type 3B subfamily.

The protein localises to the cytoplasm. The catalysed reaction is D-sedoheptulose 7-phosphate + D-glyceraldehyde 3-phosphate = D-erythrose 4-phosphate + beta-D-fructose 6-phosphate. Its pathway is carbohydrate degradation; pentose phosphate pathway; D-glyceraldehyde 3-phosphate and beta-D-fructose 6-phosphate from D-ribose 5-phosphate and D-xylulose 5-phosphate (non-oxidative stage): step 2/3. Functionally, transaldolase is important for the balance of metabolites in the pentose-phosphate pathway. This is Probable transaldolase from Streptococcus equi subsp. zooepidemicus (strain MGCS10565).